Reading from the N-terminus, the 179-residue chain is Phosphopantetheine adenylyltransferase (179 aa).

Residue Ser-23 participates in substrate binding. ATP is bound by residues 23-24 and His-31; that span reads SF. Lys-55, Ala-87, and Arg-101 together coordinate substrate. Residues 102 to 104, Glu-112, and 137 to 143 contribute to the ATP site; these read GIR and FAHVSSS.

This sequence belongs to the bacterial CoaD family. As to quaternary structure, homohexamer. Requires Mg(2+) as cofactor.

The protein resides in the cytoplasm. It carries out the reaction (R)-4'-phosphopantetheine + ATP + H(+) = 3'-dephospho-CoA + diphosphate. It functions in the pathway cofactor biosynthesis; coenzyme A biosynthesis; CoA from (R)-pantothenate: step 4/5. In terms of biological role, reversibly transfers an adenylyl group from ATP to 4'-phosphopantetheine, yielding dephospho-CoA (dPCoA) and pyrophosphate. The protein is Phosphopantetheine adenylyltransferase of Rhodopirellula baltica (strain DSM 10527 / NCIMB 13988 / SH1).